The chain runs to 339 residues: Holliday junction branch migration complex subunit RuvB (339 aa).

The interval 1–22 (MIDADPTLRPEPLPEDNDRALR) is disordered. The interval 1–182 (MIDADPTLRP…FGIPTRLQFY (182 aa)) is large ATPase domain (RuvB-L). ATP-binding positions include Leu21, Arg22, Gly63, Lys66, Thr67, Thr68, 129 to 131 (EDF), Arg172, Tyr182, and Arg219. Thr67 contacts Mg(2+). The segment at 183–253 (TIDELFEIVS…LADGALTRLG (71 aa)) is small ATPAse domain (RuvB-S). Residues 256-339 (QLGLDGADRR…PPKSQSDLFG (84 aa)) are head domain (RuvB-H). The DNA site is built by Arg292, Arg311, and Arg316.

Belongs to the RuvB family. As to quaternary structure, homohexamer. Forms an RuvA(8)-RuvB(12)-Holliday junction (HJ) complex. HJ DNA is sandwiched between 2 RuvA tetramers; dsDNA enters through RuvA and exits via RuvB. An RuvB hexamer assembles on each DNA strand where it exits the tetramer. Each RuvB hexamer is contacted by two RuvA subunits (via domain III) on 2 adjacent RuvB subunits; this complex drives branch migration. In the full resolvosome a probable DNA-RuvA(4)-RuvB(12)-RuvC(2) complex forms which resolves the HJ.

It localises to the cytoplasm. The catalysed reaction is ATP + H2O = ADP + phosphate + H(+). In terms of biological role, the RuvA-RuvB-RuvC complex processes Holliday junction (HJ) DNA during genetic recombination and DNA repair, while the RuvA-RuvB complex plays an important role in the rescue of blocked DNA replication forks via replication fork reversal (RFR). RuvA specifically binds to HJ cruciform DNA, conferring on it an open structure. The RuvB hexamer acts as an ATP-dependent pump, pulling dsDNA into and through the RuvAB complex. RuvB forms 2 homohexamers on either side of HJ DNA bound by 1 or 2 RuvA tetramers; 4 subunits per hexamer contact DNA at a time. Coordinated motions by a converter formed by DNA-disengaged RuvB subunits stimulates ATP hydrolysis and nucleotide exchange. Immobilization of the converter enables RuvB to convert the ATP-contained energy into a lever motion, pulling 2 nucleotides of DNA out of the RuvA tetramer per ATP hydrolyzed, thus driving DNA branch migration. The RuvB motors rotate together with the DNA substrate, which together with the progressing nucleotide cycle form the mechanistic basis for DNA recombination by continuous HJ branch migration. Branch migration allows RuvC to scan DNA until it finds its consensus sequence, where it cleaves and resolves cruciform DNA. In Ruegeria sp. (strain TM1040) (Silicibacter sp.), this protein is Holliday junction branch migration complex subunit RuvB.